The sequence spans 219 residues: Small ribosomal subunit protein uS3c (219 aa).

In terms of domain architecture, KH type-2 spans 43–118 (IKNYVQKNMK…KLNIAITRIA (76 aa)).

This sequence belongs to the universal ribosomal protein uS3 family. As to quaternary structure, part of the 30S ribosomal subunit.

It localises to the plastid. The protein resides in the chloroplast. This chain is Small ribosomal subunit protein uS3c (rps3), found in Panax ginseng (Korean ginseng).